A 375-amino-acid chain; its full sequence is Growth/differentiation factor 8 (375 aa).

The signal sequence occupies residues 1–23 (MQKLQLCVYIYLFMLIVAGPVDL). A propeptide spanning residues 24–266 (NENSEQKENV…VTDTPKRSRR (243 aa)) is cleaved from the precursor. An N-linked (GlcNAc...) asparagine glycan is attached at Asn-71. 4 cysteine pairs are disulfide-bonded: Cys-272-Cys-282, Cys-281-Cys-340, Cys-309-Cys-372, and Cys-313-Cys-374.

This sequence belongs to the TGF-beta family. As to quaternary structure, homodimer; disulfide-linked. Interacts with WFIKKN2, leading to inhibit its activity. Interacts with FST3. In terms of processing, synthesized as large precursor molecule that undergoes proteolytic cleavage to generate an N-terminal propeptide and a disulfide linked C-terminal dimer, which is the biologically active molecule. The circulating form consists of a latent complex of the C-terminal dimer and other proteins, including its propeptide, which maintain the C-terminal dimer in a latent, inactive state. Ligand activation requires additional cleavage of the prodomain by a tolloid-like metalloproteinase.

Its subcellular location is the secreted. In terms of biological role, acts specifically as a negative regulator of skeletal muscle growth. The protein is Growth/differentiation factor 8 (MSTN) of Homo sapiens (Human).